The sequence spans 330 residues: Atypical chemokine receptor 1 (330 aa).

Over 1–57 the chain is Extracellular; sequence MGNCLYPVADDNSTKLAIKEDFLIDFPEDYYPDYNETDVEAAAPCHSCSLLNYSSLP. Asparagine 12, asparagine 35, and asparagine 52 each carry an N-linked (GlcNAc...) asparagine glycan. 2 cysteine pairs are disulfide-bonded: cysteine 45–cysteine 270 and cysteine 123–cysteine 189. A helical transmembrane segment spans residues 58–78; that stretch reads FFILVSILGILASGTILYALL. Topologically, residues 79 to 89 are cytoplasmic; the sequence is RPLFRWQLYQD. A helical membrane pass occupies residues 90–110; it reads RSTLVQLAVGSALFSIVVPIL. Residues 111–123 are Extracellular-facing; sequence ARGLSGALITSLC. A helical transmembrane segment spans residues 124-147; that stretch reads HLAHLVAYGSAFAQALLIGYHACL. The Cytoplasmic segment spans residues 148-160; sequence GPQLGAGQVPGLR. A helical transmembrane segment spans residues 161–181; that stretch reads LGVTVGLWGVAALLSLPVVLG. The Extracellular segment spans residues 182 to 201; sequence SDTSQGLCTVTFSGEWETLR. A helical membrane pass occupies residues 202–222; it reads YIHAAACFAIFVLLPLGLLGT. Topologically, residues 223–238 are cytoplasmic; it reads KGLKTVLGRAPCPWVD. A helical membrane pass occupies residues 239-259; sequence VLWVWFIFWWPQGMTLGLDSL. Over 260–281 the chain is Extracellular; that stretch reads VRSKAIVVSTCPAQQALDMLLD. A helical transmembrane segment spans residues 282 to 302; the sequence is VAEALAILHCVATPLLLAWVC. Topologically, residues 303-330 are cytoplasmic; that stretch reads YQATHTSPPSLPLPTTQTSHLDTLGGKS.

Belongs to the G-protein coupled receptor 1 family. Atypical chemokine receptor subfamily.

It is found in the early endosome. The protein localises to the recycling endosome. Its subcellular location is the membrane. Atypical chemokine receptor that controls chemokine levels and localization via high-affinity chemokine binding that is uncoupled from classic ligand-driven signal transduction cascades, resulting instead in chemokine sequestration, degradation, or transcytosis. Also known as interceptor (internalizing receptor) or chemokine-scavenging receptor or chemokine decoy receptor. Has a promiscuous chemokine-binding profile, interacting with inflammatory chemokines of both the CXC and the CC subfamilies but not with homeostatic chemokines. Acts as a receptor for chemokines including CCL2, CCL5, CCL7, CCL11, CCL13, CCL14, CCL17, CXCL5, CXCL6, IL8/CXCL8, CXCL11, GRO, RANTES, MCP-1 and TARC. May regulate chemokine bioavailability and, consequently, leukocyte recruitment through two distinct mechanisms: when expressed in endothelial cells, it sustains the abluminal to luminal transcytosis of tissue-derived chemokines and their subsequent presentation to circulating leukocytes; when expressed in erythrocytes, serves as blood reservoir of cognate chemokines but also as a chemokine sink, buffering potential surges in plasma chemokine levels. This is Atypical chemokine receptor 1 (ACKR1) from Bos taurus (Bovine).